Here is a 469-residue protein sequence, read N- to C-terminus: MNPNQKIITIGSVSLTIATICFLMQIAILVTTVTLHFKQYECSSPPNNQVMPCEPIIIERNITEIVYLTNTTIEKEICPKLVEYRNWSKPQCKITGFAPFSKDNSIRLSAGGDIWVTREPYVSCDPGKCYQFALGQGTTLDNKHSNDTIHDRTPYRTLLMNELGVPFHLGTRQVCIAWSSSSCHDGKAWLHVCVTGHDKNATASFIYDGRLVDSIGSWSKNILRTQESECVCINGTCTVVMTDGSASERADTKILFIEEGKIVHISPLSGSAQHVEECSCYPRYPGVRCVCRDNWKGSNRPVVDINVKDYSIVSSYVCSGLVGDTPRKNDRSSSSYCRNPNNEKGNHGVKGWAFDDGNDVWMGRTISEESRSGYETFKVIGGWSTPNSKLQINRQVIVDSDNRSGYSGIFSVEGKSCINRCFYVELIRGREQETRVWWTSNSIVVFCGTSGTYGTGSWPDGADINLMPI.

At 1–9 (MNPNQKIIT) the chain is on the intravirion side. Residues 10–30 (IGSVSLTIATICFLMQIAILV) form a helical membrane-spanning segment. Residues 11–33 (GSVSLTIATICFLMQIAILVTTV) form an involved in apical transport and lipid raft association region. Over 31–469 (TTVTLHFKQY…DGADINLMPI (439 aa)) the chain is Virion surface. Positions 36–88 (HFKQYECSSPPNNQVMPCEPIIIERNITEIVYLTNTTIEKEICPKLVEYRNWS) are hypervariable stalk region. N-linked (GlcNAc...) asparagine; by host glycans are attached at residues Asn-61, Asn-70, and Asn-86. The segment at 91-469 (QCKITGFAPF…DGADINLMPI (379 aa)) is head of neuraminidase. 8 cysteine pairs are disulfide-bonded: Cys-92–Cys-417, Cys-124–Cys-129, Cys-183–Cys-230, Cys-232–Cys-237, Cys-278–Cys-291, Cys-280–Cys-289, Cys-318–Cys-337, and Cys-421–Cys-447. Residue Arg-118 participates in substrate binding. N-linked (GlcNAc...) asparagine; by host glycosylation is present at Asn-146. Residue Asp-151 is the Proton donor/acceptor of the active site. Arg-152 is a binding site for substrate. N-linked (GlcNAc...) asparagine; by host glycosylation is found at Asn-200 and Asn-234. A substrate-binding site is contributed by 276–277 (EE). Residue Arg-292 participates in substrate binding. Residues Asp-293, Gly-297, and Asp-324 each coordinate Ca(2+). Residue Arg-371 coordinates substrate. Asn-402 is a glycosylation site (N-linked (GlcNAc...) asparagine; by host). Tyr-406 functions as the Nucleophile in the catalytic mechanism.

It belongs to the glycosyl hydrolase 34 family. In terms of assembly, homotetramer. Ca(2+) serves as cofactor. Post-translationally, N-glycosylated.

Its subcellular location is the virion membrane. It localises to the host apical cell membrane. It catalyses the reaction Hydrolysis of alpha-(2-&gt;3)-, alpha-(2-&gt;6)-, alpha-(2-&gt;8)- glycosidic linkages of terminal sialic acid residues in oligosaccharides, glycoproteins, glycolipids, colominic acid and synthetic substrates.. Inhibited by the neuraminidase inhibitors zanamivir (Relenza) and oseltamivir (Tamiflu). These drugs interfere with the release of progeny virus from infected cells and are effective against all influenza strains. Resistance to neuraminidase inhibitors is quite rare. In terms of biological role, catalyzes the removal of terminal sialic acid residues from viral and cellular glycoconjugates. Cleaves off the terminal sialic acids on the glycosylated HA during virus budding to facilitate virus release. Additionally helps virus spread through the circulation by further removing sialic acids from the cell surface. These cleavages prevent self-aggregation and ensure the efficient spread of the progeny virus from cell to cell. Otherwise, infection would be limited to one round of replication. Described as a receptor-destroying enzyme because it cleaves a terminal sialic acid from the cellular receptors. May facilitate viral invasion of the upper airways by cleaving the sialic acid moieties on the mucin of the airway epithelial cells. Likely to plays a role in the budding process through its association with lipid rafts during intracellular transport. May additionally display a raft-association independent effect on budding. Plays a role in the determination of host range restriction on replication and virulence. Sialidase activity in late endosome/lysosome traffic seems to enhance virus replication. This is Neuraminidase from Influenza A virus (strain A/Memphis/4/1980 H3N2).